A 211-amino-acid polypeptide reads, in one-letter code: Large ribosomal subunit protein uL4 (211 aa).

A compositionally biased stretch (polar residues) spans 41–53 (QAHSRQGTASTLT). A disordered region spans residues 41-85 (QAHSRQGTASTLTRAEVRGGGRKPYKQKGTGRARQGSIRTPLRPG). Residues 60-71 (GGRKPYKQKGTG) are compositionally biased toward basic residues.

Belongs to the universal ribosomal protein uL4 family. As to quaternary structure, part of the 50S ribosomal subunit.

One of the primary rRNA binding proteins, this protein initially binds near the 5'-end of the 23S rRNA. It is important during the early stages of 50S assembly. It makes multiple contacts with different domains of the 23S rRNA in the assembled 50S subunit and ribosome. In terms of biological role, forms part of the polypeptide exit tunnel. The protein is Large ribosomal subunit protein uL4 of Prochlorococcus marinus (strain SARG / CCMP1375 / SS120).